A 517-amino-acid polypeptide reads, in one-letter code: Bifunctional purine biosynthesis protein PurH (517 aa).

An MGS-like domain is found at methionine 1 to valine 145.

Belongs to the PurH family.

It catalyses the reaction (6R)-10-formyltetrahydrofolate + 5-amino-1-(5-phospho-beta-D-ribosyl)imidazole-4-carboxamide = 5-formamido-1-(5-phospho-D-ribosyl)imidazole-4-carboxamide + (6S)-5,6,7,8-tetrahydrofolate. The catalysed reaction is IMP + H2O = 5-formamido-1-(5-phospho-D-ribosyl)imidazole-4-carboxamide. It participates in purine metabolism; IMP biosynthesis via de novo pathway; 5-formamido-1-(5-phospho-D-ribosyl)imidazole-4-carboxamide from 5-amino-1-(5-phospho-D-ribosyl)imidazole-4-carboxamide (10-formyl THF route): step 1/1. The protein operates within purine metabolism; IMP biosynthesis via de novo pathway; IMP from 5-formamido-1-(5-phospho-D-ribosyl)imidazole-4-carboxamide: step 1/1. This is Bifunctional purine biosynthesis protein PurH from Prochlorococcus marinus (strain MIT 9312).